The primary structure comprises 229 residues: MENSLKIKDIPKKERPKEKLLSYGADTLNNSELLAIILRTGTKGENVLQLSNRLLSKFQGLDGVLEASLDDITSIKGIKEGKASQILALAELFKRFRTFKSADRDIKIMSPNDLAMLINGEMSLLKQEILKVIFLNTKNIVIGTKDVFKGSLNTSIVHPREIFKEAVNKSSAKIIISHNHPSGDPTPSKEDINITLRIKECGEIMGIQLLDHIIIGKNGFISLKEKGFI.

The 123-residue stretch at 107 to 229 (KIMSPNDLAM…FISLKEKGFI (123 aa)) folds into the MPN domain. Residues His178, His180, and Asp191 each contribute to the Zn(2+) site. A JAMM motif motif is present at residues 178–191 (HNHPSGDPTPSKED).

The protein belongs to the UPF0758 family.

In Clostridium botulinum (strain Eklund 17B / Type B), this protein is UPF0758 protein CLL_A0562.